A 384-amino-acid chain; its full sequence is Ribosomal RNA small subunit methyltransferase H (384 aa).

S-adenosyl-L-methionine is bound by residues 99 to 101, Asp-118, Tyr-145, Asp-169, and Gln-176; that span reads GGH.

It belongs to the methyltransferase superfamily. RsmH family.

The protein localises to the cytoplasm. The enzyme catalyses cytidine(1402) in 16S rRNA + S-adenosyl-L-methionine = N(4)-methylcytidine(1402) in 16S rRNA + S-adenosyl-L-homocysteine + H(+). Specifically methylates the N4 position of cytidine in position 1402 (C1402) of 16S rRNA. The chain is Ribosomal RNA small subunit methyltransferase H from Mycobacteroides abscessus (strain ATCC 19977 / DSM 44196 / CCUG 20993 / CIP 104536 / JCM 13569 / NCTC 13031 / TMC 1543 / L948) (Mycobacterium abscessus).